The chain runs to 99 residues: Large ribosomal subunit protein eL21 (99 aa).

Belongs to the eukaryotic ribosomal protein eL21 family.

This chain is Large ribosomal subunit protein eL21, found in Ignicoccus hospitalis (strain KIN4/I / DSM 18386 / JCM 14125).